The following is a 420-amino-acid chain: Phosphoglycerate kinase (420 aa).

(2R)-3-phosphoglycerate contacts are provided by valine 24, aspartate 25, phenylalanine 26, asparagine 27, arginine 40, serine 63, histidine 64, glycine 66, arginine 67, leucine 122, arginine 123, histidine 170, and arginine 171. Glycine 214 is a binding site for ADP. A CDP-binding site is contributed by glycine 214. AMP contacts are provided by alanine 215 and lysine 216. Alanine 215 is an ATP binding site. Mg(2+) is bound at residue alanine 215. Aspartate 219 lines the CDP pocket. Aspartate 219 contacts Mg(2+). Lysine 220 provides a ligand contact to AMP. Lysine 220 is an ATP binding site. Glycine 238 lines the ADP pocket. Glycine 238 is a CDP binding site. Residues glycine 239 and glycine 313 each contribute to the AMP site. ATP-binding residues include glycine 239 and glycine 313. The CDP site is built by glycine 338 and phenylalanine 343. Residue phenylalanine 343 coordinates ADP. Glutamate 344 contributes to the AMP binding site. Glutamate 344, aspartate 375, and threonine 376 together coordinate ATP. Residue aspartate 375 participates in Mg(2+) binding.

The protein belongs to the phosphoglycerate kinase family. As to quaternary structure, monomer. The cofactor is Mg(2+).

The enzyme catalyses (2R)-3-phosphoglycerate + ATP = (2R)-3-phospho-glyceroyl phosphate + ADP. The protein operates within carbohydrate degradation; glycolysis; pyruvate from D-glyceraldehyde 3-phosphate: step 2/5. This chain is Phosphoglycerate kinase (PGK), found in Tetrahymena thermophila.